We begin with the raw amino-acid sequence, 201 residues long: Transmembrane 4 L6 family member 18 (201 aa).

Over 1–9 (MGSRKCGSC) the chain is Cytoplasmic. Residues 10-30 (LSSLLIPLALWSIIVNILLYF) traverse the membrane as a helical segment. The Extracellular segment spans residues 31 to 49 (PNGQASYASSNKLTNYVWY). The chain crosses the membrane as a helical span at residues 50 to 70 (FEGICFSGIMMLVVAAVLLVL). Residues 71–93 (ENDNNYKCCQSENCSKKYMTVLS) lie on the Cytoplasmic side of the membrane. Residues 94–114 (MIFSALGIAFSGYCLVISALG) traverse the membrane as a helical segment. At 115–157 (LLQGPYCRTLDGWEYAFEGTAGRFLTDSREWIQCLEPAHVVEW) the chain is on the extracellular side. The helical transmembrane segment at 158–178 (NIILFSILIALSGLQVIVCLI) threads the bilayer. Topologically, residues 179–201 (RVVIQLSKSLCGTYSVIIQPGII) are cytoplasmic.

It belongs to the L6 tetraspanin family.

The protein resides in the membrane. The chain is Transmembrane 4 L6 family member 18 (TM4SF18) from Bos taurus (Bovine).